A 43-amino-acid polypeptide reads, in one-letter code: Photosystem II reaction center protein Y (43 aa).

The chain crosses the membrane as a helical span at residues 8–26; sequence LFLVVAPILAAVSWAAFNI.

The protein belongs to the PsbY family. In terms of assembly, PSII is composed of 1 copy each of membrane proteins PsbA, PsbB, PsbC, PsbD, PsbE, PsbF, PsbH, PsbI, PsbJ, PsbK, PsbL, PsbM, PsbT, PsbX, PsbY, PsbZ, Psb30/Ycf12, peripheral proteins PsbO, CyanoQ (PsbQ), PsbU, PsbV and a large number of cofactors. It forms dimeric complexes.

The protein resides in the cellular thylakoid membrane. In terms of biological role, loosely associated component of the core of photosystem II (PSII), it is not always seen in crystals. PSII is a light-driven water plastoquinone oxidoreductase, using light energy to abstract electrons from H(2)O, generating a proton gradient subsequently used for ATP formation. This Parasynechococcus marenigrum (strain WH8102) protein is Photosystem II reaction center protein Y.